The sequence spans 601 residues: Probable sphingosine-1-phosphate lyase (601 aa).

Residue Lys360 is modified to N6-(pyridoxal phosphate)lysine.

It belongs to the group II decarboxylase family. Sphingosine-1-phosphate lyase subfamily. Pyridoxal 5'-phosphate is required as a cofactor.

The enzyme catalyses sphinganine 1-phosphate = hexadecanal + phosphoethanolamine. Cleaves phosphorylated sphingoid bases (PSBs), such as sphingosine-1-phosphate, into fatty aldehydes and phosphoethanolamine. Possibly implicated in influencing the macrophage autophagy pathway. The chain is Probable sphingosine-1-phosphate lyase from Legionella pneumophila subsp. pneumophila (strain Philadelphia 1 / ATCC 33152 / DSM 7513).